The chain runs to 227 residues: ATP phosphoribosyltransferase (227 aa).

The protein belongs to the ATP phosphoribosyltransferase family. Short subfamily. Heteromultimer composed of HisG and HisZ subunits.

The protein localises to the cytoplasm. The catalysed reaction is 1-(5-phospho-beta-D-ribosyl)-ATP + diphosphate = 5-phospho-alpha-D-ribose 1-diphosphate + ATP. It functions in the pathway amino-acid biosynthesis; L-histidine biosynthesis; L-histidine from 5-phospho-alpha-D-ribose 1-diphosphate: step 1/9. Its function is as follows. Catalyzes the condensation of ATP and 5-phosphoribose 1-diphosphate to form N'-(5'-phosphoribosyl)-ATP (PR-ATP). Has a crucial role in the pathway because the rate of histidine biosynthesis seems to be controlled primarily by regulation of HisG enzymatic activity. In Rhodospirillum rubrum (strain ATCC 11170 / ATH 1.1.1 / DSM 467 / LMG 4362 / NCIMB 8255 / S1), this protein is ATP phosphoribosyltransferase.